The following is a 1016-amino-acid chain: MLPLCSERELNELLARKEEEWRVLQAHRAQLQEAALQAAQNRLEETQGKLQRLQEDFVYNLQVLEERDRELERYDVEFTQARQREEAQQAEASELKIEVAKLKQDLTREARRVGELQHQHQLMLQEHRLELERVHSDKNSELAHQREQNERLEWELERKLKELDGELALQRQELLLEFESKMQRREHEFQLRADDMSNVVLTHELKIKLLNKELQALRDAGARAAESLQKAEAEHVELERKLQERARELQDLEAVKDARIKGLEKKLYSAQLAKKKAEETFRRKHEELDRQAREKDTVLAAVKRAHAEELQTLDAKVLELQFLCETLEGQLRRAECTRAEDAKEKNALTDKFREDAAALKAAWDAQITQMSKETVSKDFQIHTLQEEEMKLKAQVARFQQDIDRYKQQLSLAVERGQSLEREQVQLGLDWQRRCDDIERDQIQKSETLIEGLTKARDQVAAKLQETEKALRQQETLLKAVSLERDQAMETLRTHGLLPGQEAQVPPQQHEGEIRADSPSTEIQRLQEQNAGLRNAVSQMRREMEMLSGHLPPAQPEECSNADPDPKAGGDSTPPDYVLTLEAEMQNLKHKLKALEEQLQSTEEPVKTSVATADPHHGVHSSAAAADAALADQTSTALALRKLGDRVHLLNLLVTQLKRKLRQKPRELVPVQHEVPSEVDQVHLEVLELQKQVAELRKHLKVTPQGEPSSREQLQRQGVADRYPMGMEDQTESPTFPQEGAQPPQTIYVTHLQRKLKDAARKILSLRLEREQLLEMGNRLRAEQGHAKGKPTPCPGPPTSEPQDPQEVPERSLDRGPPLGQLQPYSTTQDPRHTKRRCASEYAGKSQPHSAQVGSKTNTPRGHKAEMASRPAQLSQKQHRIPTETWKPVYQKENRTPKLPQAHEVPEESDHRTHRSSSLASSSLQDIWRLLELGSSPSGVPSQDNSVAECPAPSRPSCFQKVNRSPVPIQKAFAVKGLKMEAQPKATPPRPSKSHPAKPTNCQQQRPSRIRNYNLKD.

Residues 1 to 503 form a centrosomal targeting domain region; the sequence is MLPLCSEREL…HGLLPGQEAQ (503 aa). Coiled-coil stretches lie at residues 14-607, 676-700, and 748-775; these read LARK…PVKT, SEVD…KHLK, and VTHL…LLEM. 2 disordered regions span residues 500-519 and 549-573; these read QEAQ…DSPS and HLPP…DSTP. Residues 604 to 1016 are microtubule binding domain; it reads PVKTSVATAD…SRIRNYNLKD (413 aa). Disordered regions lie at residues 781–921 and 933–1016; these read AEQG…LASS and GSSP…NLKD. 2 stretches are compositionally biased toward polar residues: residues 846-859 and 934-945; these read QPHS…TNTP and SSPSGVPSQDNS.

Interacts with CEP63; the interaction is required for their location to proximal end of centrioles. Interacts with microtubules.

Its subcellular location is the cytoplasm. It is found in the cytoskeleton. The protein localises to the microtubule organizing center. It localises to the centrosome. The protein resides in the centriolar satellite. Its subcellular location is the centriole. It is found in the spindle. Its function is as follows. Pleiotropic regulator of centriole duplication, mitosis, and ciliogenesis. Critical interface between centrosome and microtubule-mediated cellular processes. Centriole duplication protein required for recruitment of CEP63, CEP152, and PLK4 to the centrosome. Independent of its centrosomal targeting, localizes to and interacts with microtubules and regulates microtubule nucleation, stability, and mitotic progression. The chain is Coiled-coil domain-containing protein 57 from Mus musculus (Mouse).